A 204-amino-acid polypeptide reads, in one-letter code: Nascent polypeptide-associated complex subunit alpha (204 aa).

The segment covering 1-19 (MADPRVEELPDEEVPKTNV) has biased composition (basic and acidic residues). Disordered regions lie at residues 1 to 48 (MADP…HSRN) and 119 to 167 (LAAA…GLEA). Over residues 22–32 (AGSDSESEAGE) the composition is skewed to acidic residues. The 66-residue stretch at 46-111 (SRNEKKARKA…AKIEDLNSQA (66 aa)) folds into the NAC-A/B domain. Low complexity predominate over residues 119 to 128 (LAAAEAAAGE). The segment covering 129–151 (HAGHDHDHDHGKGKAPETEAKKE) has biased composition (basic and acidic residues). Acidic residues predominate over residues 152–164 (EEEDDGEEVDETG). The UBA domain occupies 165 to 204 (LEAKDIELVMAQANVSRKKAVKALRENDNDIVNSIMALSI).

Belongs to the NAC-alpha family. In terms of assembly, part of the nascent polypeptide-associated complex (NAC), consisting of egd2 and egd1. NAC associates with ribosomes via egd1.

The protein resides in the cytoplasm. It is found in the nucleus. Component of the nascent polypeptide-associated complex (NAC), a dynamic component of the ribosomal exit tunnel, protecting the emerging polypeptides from interaction with other cytoplasmic proteins to ensure appropriate nascent protein targeting. The NAC complex also promotes mitochondrial protein import by enhancing productive ribosome interactions with the outer mitochondrial membrane and blocks the inappropriate interaction of ribosomes translating non-secretory nascent polypeptides with translocation sites in the membrane of the endoplasmic reticulum. Egd2 may also be involved in transcription regulation. This chain is Nascent polypeptide-associated complex subunit alpha (egd2), found in Aspergillus clavatus (strain ATCC 1007 / CBS 513.65 / DSM 816 / NCTC 3887 / NRRL 1 / QM 1276 / 107).